The primary structure comprises 825 residues: Arabinolytic transcriptional activator araR (825 aa).

Residues 1-17 (MASSHQGNGTVPNSQTD) show a composition bias toward polar residues. Residues 1–28 (MASSHQGNGTVPNSQTDAPPDSSTKRRW) form a disordered region. Positions 35–61 (CDSCHARRVRCDRQFPCSRCLRSEITC) form a DNA-binding region, zn(2)-C6 fungal-type. The interval 117 to 152 (STFHHRSPPANAPTVSAPSVDGRRSQTDPQLPVRRP) is disordered.

Belongs to the xlnR/xlr1 family. araR subfamily.

The protein resides in the nucleus. Transcriptional activator of the arabinanolytic system. Involved in the regulation of extracellular arabinanolytic genes and in the regulation of the intracellular activities of L-arabinose catabolic genes in the pentose catabolic pathway (PCP) in response to the presence of L-arabinose. The sequence is that of Arabinolytic transcriptional activator araR from Emericella nidulans (strain FGSC A4 / ATCC 38163 / CBS 112.46 / NRRL 194 / M139) (Aspergillus nidulans).